The sequence spans 142 residues: Hemoglobin subunit alpha (142 aa).

The Globin domain occupies valine 2 to arginine 142. The residue at position 4 (serine 4) is a Phosphoserine. N6-succinyllysine is present on lysine 8. Position 9 is a phosphothreonine (threonine 9). Lysine 12 carries the post-translational modification N6-succinyllysine. Lysine 17 carries the N6-acetyllysine; alternate modification. Lysine 17 carries the N6-succinyllysine; alternate modification. Tyrosine 25 is subject to Phosphotyrosine. Serine 36 is modified (phosphoserine). The residue at position 41 (lysine 41) is an N6-succinyllysine. Position 50 is a phosphoserine (serine 50). Histidine 59 provides a ligand contact to O2. Histidine 88 serves as a coordination point for heme b. Serine 103 is subject to Phosphoserine. A Phosphothreonine modification is found at threonine 109. 2 positions are modified to phosphoserine: serine 125 and serine 132. Phosphothreonine is present on residues threonine 135 and threonine 138. The residue at position 139 (serine 139) is a Phosphoserine.

The protein belongs to the globin family. Heterotetramer of two alpha chains and two beta chains in adult hemoglobin A (HbA); two alpha chains and two delta chains in adult hemoglobin A2 (HbA2); two alpha chains and two epsilon chains in early embryonic hemoglobin Gower-2; two alpha chains and two gamma chains in fetal hemoglobin F (HbF). In terms of tissue distribution, red blood cells.

In terms of biological role, involved in oxygen transport from the lung to the various peripheral tissues. Hemopressin acts as an antagonist peptide of the cannabinoid receptor CNR1. Hemopressin-binding efficiently blocks cannabinoid receptor CNR1 and subsequent signaling. The protein is Hemoglobin subunit alpha (HBA1) of Pan paniscus (Pygmy chimpanzee).